Here is a 399-residue protein sequence, read N- to C-terminus: 1-deoxy-D-xylulose 5-phosphate reductoisomerase (399 aa).

5 residues coordinate NADPH: Thr-13, Gly-14, Ser-15, Ile-16, and Asn-127. Residue Lys-128 participates in 1-deoxy-D-xylulose 5-phosphate binding. Glu-129 serves as a coordination point for NADPH. Asp-153 provides a ligand contact to Mn(2+). Ser-154, Glu-155, Ser-187, and His-210 together coordinate 1-deoxy-D-xylulose 5-phosphate. Glu-155 provides a ligand contact to Mn(2+). Gly-216 contributes to the NADPH binding site. 1-deoxy-D-xylulose 5-phosphate-binding residues include Ser-223, Asn-228, Lys-229, and Glu-232. Glu-232 is a binding site for Mn(2+).

It belongs to the DXR family. The cofactor is Mg(2+). It depends on Mn(2+) as a cofactor.

The enzyme catalyses 2-C-methyl-D-erythritol 4-phosphate + NADP(+) = 1-deoxy-D-xylulose 5-phosphate + NADPH + H(+). Its pathway is isoprenoid biosynthesis; isopentenyl diphosphate biosynthesis via DXP pathway; isopentenyl diphosphate from 1-deoxy-D-xylulose 5-phosphate: step 1/6. In terms of biological role, catalyzes the NADPH-dependent rearrangement and reduction of 1-deoxy-D-xylulose-5-phosphate (DXP) to 2-C-methyl-D-erythritol 4-phosphate (MEP). The chain is 1-deoxy-D-xylulose 5-phosphate reductoisomerase from Bordetella parapertussis (strain 12822 / ATCC BAA-587 / NCTC 13253).